The primary structure comprises 234 residues: Thioredoxin-dependent peroxide reductase, mitochondrial (234 aa).

The N-terminal 30 residues, 1 to 30 (MSFVARSLIRNVPLMGKAILSQQKQIAARL), are a transit peptide targeting the mitochondrion. Residues 40 to 198 (VRVQQPAPDF…VLRLIKAFQF (159 aa)) form the Thioredoxin domain. C85 acts as the Cysteine sulfenic acid (-SOH) intermediate in catalysis.

This sequence belongs to the peroxiredoxin family. AhpC/Prx1 subfamily. As to quaternary structure, homodimer; disulfide-linked, upon oxidation. 6 homodimers assemble to form a ring-like dodecamer. Also exists as a monomer, however the monomeric form is present at a much lower level than the homodimeric form. As to expression, expressed in thoracic flight muscles (at protein level). Detected in the head and body (at protein level).

The protein localises to the mitochondrion. The catalysed reaction is a hydroperoxide + [thioredoxin]-dithiol = an alcohol + [thioredoxin]-disulfide + H2O. Thiol-specific peroxidase that catalyzes the reduction of hydrogen peroxide and organic hydroperoxides to water and alcohols, respectively. Plays a role in cell protection against oxidative stress by detoxifying peroxides. May be involved in aging-associated changes in the responsiveness to oxidative stress. Involved in the maintenance of global thiol redox homeostasis. Functions in the central nervous system (CNS) and in motor neurons and is essential for normal motor function. This chain is Thioredoxin-dependent peroxide reductase, mitochondrial, found in Drosophila melanogaster (Fruit fly).